Consider the following 353-residue polypeptide: Colistin resistance protein EmrA (353 aa).

A helical transmembrane segment spans residues 21 to 41 (WGVFSVLLLFLVAGILYYFFV). The stretch at 132 to 204 (VVAAQADLAR…QASRAQLLAD (73 aa)) forms a coiled coil.

It belongs to the membrane fusion protein (MFP) (TC 8.A.1) family.

It localises to the cell inner membrane. Its function is as follows. Probably part of an efflux pump system that contributes to adaptation to osmotic stress and resistance to colistin. The protein is Colistin resistance protein EmrA of Acinetobacter baumannii (strain ATCC 17978 / DSM 105126 / CIP 53.77 / LMG 1025 / NCDC KC755 / 5377).